Consider the following 199-residue polypeptide: MALQSEEKLEVGYSSLQPKTRKWVLLMLRVLAFFATAAATVVMGLNKETKTLVVATVGSTPIKASLAAKFQHTPAFVFFVIANGLASIHNLVMIMGDLFGQKLDYKGLRLAMIAILDMMTVALVSGGVSAAAFMAELGKNGNSHARWNKICDKFETFCDHGGGALIASFAGLILMLIISVMSIIKLLIKPKPDSTIVVP.

The Cytoplasmic segment spans residues 1 to 22 (MALQSEEKLEVGYSSLQPKTRK). Residues 23-43 (WVLLMLRVLAFFATAAATVVM) form a helical membrane-spanning segment. Topologically, residues 44–74 (GLNKETKTLVVATVGSTPIKASLAAKFQHTP) are extracellular. The helical transmembrane segment at 75–95 (AFVFFVIANGLASIHNLVMIM) threads the bilayer. Over 96 to 112 (GDLFGQKLDYKGLRLAM) the chain is Cytoplasmic. Residues 113 to 133 (IAILDMMTVALVSGGVSAAAF) form a helical membrane-spanning segment. Over 134-163 (MAELGKNGNSHARWNKICDKFETFCDHGGG) the chain is Extracellular. A helical membrane pass occupies residues 164–184 (ALIASFAGLILMLIISVMSII). Residues 185 to 199 (KLLIKPKPDSTIVVP) are Cytoplasmic-facing.

This sequence belongs to the Casparian strip membrane proteins (CASP) family. As to quaternary structure, homodimer and heterodimers.

It is found in the cell membrane. In Populus trichocarpa (Western balsam poplar), this protein is CASP-like protein 1B2.